Here is a 706-residue protein sequence, read N- to C-terminus: Termination factor NPH-I homolog (706 aa).

Residues 62-227 form the Helicase ATP-binding domain; that stretch reads IGQGENTRGL…VPCFNMLSGR (166 aa). 75-82 is a binding site for ATP; the sequence is HQMGMGKT. Positions 168 to 171 match the DEAH box motif; that stretch reads DEAH. The Helicase C-terminal domain occupies 417–599; it reads QCLQPLKVLE…HLNSAFRDLL (183 aa).

This sequence belongs to the DEAD box helicase family. DEAH subfamily. Part of the viral DNA-directed RNA polymerase that consists of 8 polII-like subunits (RPB1, RPB2, RPB3, RPB5, RPB6, RPB7, RPB9, RPB10), a capping enzyme and a termination factor.

It localises to the virion. Its function is as follows. Putative DNA-dependent ATPase required for providing the needed energy to achieve the termination of early transcripts. The chain is Termination factor NPH-I homolog from African swine fever virus (isolate Warthog/Namibia/Wart80/1980) (ASFV).